The following is a 447-amino-acid chain: Tubulin beta-1 chain (447 aa).

GTP-binding residues include Q11, E69, S138, G142, T143, G144, N204, and N226. E69 lines the Mg(2+) pocket.

This sequence belongs to the tubulin family. In terms of assembly, dimer of alpha and beta chains. A typical microtubule is a hollow water-filled tube with an outer diameter of 25 nm and an inner diameter of 15 nM. Alpha-beta heterodimers associate head-to-tail to form protofilaments running lengthwise along the microtubule wall with the beta-tubulin subunit facing the microtubule plus end conferring a structural polarity. Microtubules usually have 13 protofilaments but different protofilament numbers can be found in some organisms and specialized cells. It depends on Mg(2+) as a cofactor.

It is found in the cytoplasm. Its subcellular location is the cytoskeleton. Its function is as follows. Tubulin is the major constituent of microtubules, a cylinder consisting of laterally associated linear protofilaments composed of alpha- and beta-tubulin heterodimers. Microtubules grow by the addition of GTP-tubulin dimers to the microtubule end, where a stabilizing cap forms. Below the cap, tubulin dimers are in GDP-bound state, owing to GTPase activity of alpha-tubulin. This Geotrichum candidum (Oospora lactis) protein is Tubulin beta-1 chain.